The primary structure comprises 279 residues: Phosphate import ATP-binding protein PstB 2 (279 aa).

The ABC transporter domain maps to 34-274 (FDIENLDLYY…PSDDRTRGYV (241 aa)). 66 to 73 (GPSGCGKS) contacts ATP.

Belongs to the ABC transporter superfamily. Phosphate importer (TC 3.A.1.7) family. As to quaternary structure, the complex is composed of two ATP-binding proteins (PstB), two transmembrane proteins (PstC and PstA) and a solute-binding protein (PstS).

The protein localises to the cell inner membrane. The catalysed reaction is phosphate(out) + ATP + H2O = ADP + 2 phosphate(in) + H(+). Its function is as follows. Part of the ABC transporter complex PstSACB involved in phosphate import. Responsible for energy coupling to the transport system. The polypeptide is Phosphate import ATP-binding protein PstB 2 (Vibrio vulnificus (strain YJ016)).